We begin with the raw amino-acid sequence, 155 residues long: 6,7-dimethyl-8-ribityllumazine synthase (155 aa).

5-amino-6-(D-ribitylamino)uracil is bound by residues Trp24, 58–60 (AFE), and 82–84 (AVI). Position 87 to 88 (87 to 88 (GT)) interacts with (2S)-2-hydroxy-3-oxobutyl phosphate. Residue His90 is the Proton donor of the active site. Residue Phe115 coordinates 5-amino-6-(D-ribitylamino)uracil. Residue Arg129 participates in (2S)-2-hydroxy-3-oxobutyl phosphate binding.

It belongs to the DMRL synthase family. As to quaternary structure, forms an icosahedral capsid composed of 60 subunits, arranged as a dodecamer of pentamers.

It catalyses the reaction (2S)-2-hydroxy-3-oxobutyl phosphate + 5-amino-6-(D-ribitylamino)uracil = 6,7-dimethyl-8-(1-D-ribityl)lumazine + phosphate + 2 H2O + H(+). It participates in cofactor biosynthesis; riboflavin biosynthesis; riboflavin from 2-hydroxy-3-oxobutyl phosphate and 5-amino-6-(D-ribitylamino)uracil: step 1/2. Catalyzes the formation of 6,7-dimethyl-8-ribityllumazine by condensation of 5-amino-6-(D-ribitylamino)uracil with 3,4-dihydroxy-2-butanone 4-phosphate. This is the penultimate step in the biosynthesis of riboflavin. This is 6,7-dimethyl-8-ribityllumazine synthase from Teredinibacter turnerae (strain ATCC 39867 / T7901).